Here is a 209-residue protein sequence, read N- to C-terminus: Response regulator protein VraR (209 aa).

In terms of domain architecture, Response regulatory spans 4 to 120 (KVLFVDDHEM…DIADAVRKTS (117 aa)). Residue Asp-55 is modified to 4-aspartylphosphate. Residues 141–206 (RAELYEMLTE…QAVIYAFQHN (66 aa)) enclose the HTH luxR-type domain. Residues 165–184 (NQEIASASHITIKTVKTHVS) constitute a DNA-binding region (H-T-H motif).

In terms of assembly, homodimer. In terms of processing, phosphorylated by VraS. Phosphorylation state of VraR controls dimerization of the protein.

It localises to the cytoplasm. Functionally, member of the two-component regulatory system VraS/VraR involved in the control of the cell wall peptidoglycan biosynthesis. Upon cellular stress, the histidine kinase VraS transfers the phosphoryl group onto VraR. Upon phosphorylation, VraR dimerizes at the N-terminal domain. In turn, phosphorylation-induced dimerization expands and enhances the VraR binding to its own promoter leading to increased expression and subsequent modulation of as many as 40 genes, which ultimately constitute the S.aureus response to cell wall damage. In addition, inhibits the host autophagic flux and delays the early stage of autophagosome formation, thereby promoting bacterial survival. Facilitates the ability of S.aureus to resist host polymorphonuclear leukocytes-mediated phagocytosis and killing thus contributing to immune evasion. This chain is Response regulator protein VraR (vraR), found in Staphylococcus aureus (strain Mu3 / ATCC 700698).